Reading from the N-terminus, the 290-residue chain is 6-phospho-5-dehydro-2-deoxy-D-gluconate aldolase (290 aa).

The active-site Proton donor is aspartate 85. Histidine 86 and histidine 180 together coordinate Zn(2+). Glycine 181 is a dihydroxyacetone phosphate binding site. A Zn(2+)-binding site is contributed by histidine 208. Dihydroxyacetone phosphate contacts are provided by residues 209–211 (GAS) and 230–233 (NINT). Residue threonine 233 is modified to Phosphothreonine.

It belongs to the class II fructose-bisphosphate aldolase family. IolJ subfamily. Zn(2+) serves as cofactor.

The catalysed reaction is 6-phospho-5-dehydro-2-deoxy-D-gluconate = 3-oxopropanoate + dihydroxyacetone phosphate. It participates in polyol metabolism; myo-inositol degradation into acetyl-CoA; acetyl-CoA from myo-inositol: step 6/7. Functionally, produces dihydroxyacetone phosphate (DHAP or glycerone phosphate) and malonic semialdehyde (MSA or 3-oxopropanoate) from 6-phospho-5-dehydro-2-deoxy-D-gluconate (DKGP). This chain is 6-phospho-5-dehydro-2-deoxy-D-gluconate aldolase (iolJ), found in Bacillus subtilis (strain 168).